A 381-amino-acid chain; its full sequence is Cytosolic acyl coenzyme A thioester hydrolase (381 aa).

A HotDog ACOT-type 1 domain is found at 51 to 169; the sequence is LGHCVTMGRI…TLWYVPLSLK (119 aa). The active site involves Asn67. Residues Lys169 and Lys199 each carry the N6-acetyllysine modification. One can recognise a HotDog ACOT-type 2 domain in the interval 225–339; the sequence is SYSQSSLIHL…FFTYVSLNQE (115 aa). Asp256 is a catalytic residue. Lys284 carries the N6-acetyllysine modification. The interval 342–381 is disordered; the sequence is PMPVPQLVPETEDEKKRFEEGKGRYLQMKAKRQGHTEPQP. Residues 354–364 are compositionally biased toward basic and acidic residues; the sequence is DEKKRFEEGKG.

As to quaternary structure, homohexamer. In terms of tissue distribution, widely expressed with highest levels in brain. High levels also found in thymus, large intestine and testis. Negligible in muscle and adipose tissue. In the central and peripheral nervous systems, displays a predominantly neuronal localization with highest expression in cell bodies and neurites.

The protein localises to the cytoplasm. The protein resides in the cytosol. It carries out the reaction hexadecanoyl-CoA + H2O = hexadecanoate + CoA + H(+). It catalyses the reaction dodecanoyl-CoA + H2O = dodecanoate + CoA + H(+). The enzyme catalyses tetradecanoyl-CoA + H2O = tetradecanoate + CoA + H(+). The catalysed reaction is decanoyl-CoA + H2O = decanoate + CoA + H(+). It carries out the reaction octanoyl-CoA + H2O = octanoate + CoA + H(+). It catalyses the reaction octadecanoyl-CoA + H2O = octadecanoate + CoA + H(+). The enzyme catalyses (9Z)-octadecenoyl-CoA + H2O = (9Z)-octadecenoate + CoA + H(+). The protein operates within lipid metabolism; fatty acid metabolism. Its function is as follows. Catalyzes the hydrolysis of acyl-CoAs into free fatty acids and coenzyme A (CoASH), regulating their respective intracellular levels. Preferentially hydrolyzes palmitoyl-CoA, but has a broad specificity acting on other fatty acyl-CoAs with chain-lengths of C8-C18. May play an important physiological function in brain. This Mus musculus (Mouse) protein is Cytosolic acyl coenzyme A thioester hydrolase (Acot7).